The chain runs to 263 residues: 2-keto-4-pentenoate hydratase 1 (263 aa).

It belongs to the hydratase/decarboxylase family. MhpD subfamily. It depends on a divalent metal cation as a cofactor.

The enzyme catalyses (S)-4-hydroxy-2-oxopentanoate = (2Z)-2-hydroxypenta-2,4-dienoate + H2O. The protein operates within aromatic compound metabolism; 3-phenylpropanoate degradation. In terms of biological role, catalyzes the conversion of 2-hydroxypentadienoic acid (enolic form of 2-oxopent-4-enoate) to 4-hydroxy-2-ketopentanoic acid. In Dechloromonas aromatica (strain RCB), this protein is 2-keto-4-pentenoate hydratase 1.